The sequence spans 304 residues: Acetylglutamate kinase (304 aa).

Substrate is bound by residues 70–71, arginine 92, and asparagine 185; that span reads GG.

It belongs to the acetylglutamate kinase family. ArgB subfamily.

It localises to the cytoplasm. It catalyses the reaction N-acetyl-L-glutamate + ATP = N-acetyl-L-glutamyl 5-phosphate + ADP. It participates in amino-acid biosynthesis; L-arginine biosynthesis; N(2)-acetyl-L-ornithine from L-glutamate: step 2/4. Functionally, catalyzes the ATP-dependent phosphorylation of N-acetyl-L-glutamate. The sequence is that of Acetylglutamate kinase from Paracoccus denitrificans (strain Pd 1222).